The sequence spans 265 residues: Phosphatidylglycerol--prolipoprotein diacylglyceryl transferase (265 aa).

Transmembrane regions (helical) follow at residues 17–37 (LSIR…WLLG), 56–76 (LVTY…MLFY), 92–112 (WQGG…VWFF), and 117–137 (GKGF…GLFA). R139 is an a 1,2-diacyl-sn-glycero-3-phospho-(1'-sn-glycerol) binding site. Transmembrane regions (helical) follow at residues 173 to 193 (PSQL…VWLY), 201 to 221 (GAVS…VELV), and 235 to 255 (WLTM…WLLA).

This sequence belongs to the Lgt family.

The protein localises to the cell inner membrane. It carries out the reaction L-cysteinyl-[prolipoprotein] + a 1,2-diacyl-sn-glycero-3-phospho-(1'-sn-glycerol) = an S-1,2-diacyl-sn-glyceryl-L-cysteinyl-[prolipoprotein] + sn-glycerol 1-phosphate + H(+). The protein operates within protein modification; lipoprotein biosynthesis (diacylglyceryl transfer). In terms of biological role, catalyzes the transfer of the diacylglyceryl group from phosphatidylglycerol to the sulfhydryl group of the N-terminal cysteine of a prolipoprotein, the first step in the formation of mature lipoproteins. In Solidesulfovibrio magneticus (strain ATCC 700980 / DSM 13731 / RS-1) (Desulfovibrio magneticus), this protein is Phosphatidylglycerol--prolipoprotein diacylglyceryl transferase.